Consider the following 322-residue polypeptide: Cysteine protease yopT1 (322 aa).

The disordered stretch occupies residues 42 to 69 (LSHSNRQKKLSATIKHNQSSRSMLDRKL). Residues Cys-139, His-258, and Asp-274 contribute to the active site.

It belongs to the peptidase C58 family. As to quaternary structure, interacts with human ARHA.

Its subcellular location is the secreted. Functionally, cysteine protease, which is translocated into infected cells and plays a central role in pathogenesis by cleaving the C-terminus end of the human small GTPase RhoA/ARHA, a regulator of cytoskeleton. Once cleaved, ARHA loses its lipid modification, and is released from the cell membrane, leading to the subsequent disruption of actin cytoskeleton of the host cell. The sequence is that of Cysteine protease yopT1 (yopT1) from Yersinia enterocolitica serotype O:8 / biotype 1B (strain NCTC 13174 / 8081).